The chain runs to 264 residues: TLC domain-containing protein 4-B (264 aa).

Transmembrane regions (helical) follow at residues 6 to 26 (VYVVAGSFVGFQLFFSCVSPV), 50 to 70 (LVSTVHALIVGLFCLYILWYD), 84 to 104 (LVKLNVAITCGYLFYDLLLLA), 110 to 130 (MGDVFFVCHHLAALYAYGYVL), 169 to 189 (LVVANGIAMAVVFFLVRIAVM), and 210 to 230 (LAIQVAWIISCVCLDILNIIW). The TLC domain occupies 41-243 (NKLNDWNSRL…IARGCYKVIT (203 aa)).

Belongs to the TLCD4 family.

The protein localises to the membrane. This is TLC domain-containing protein 4-B (tlcd4b) from Danio rerio (Zebrafish).